Consider the following 356-residue polypeptide: Tyrosine recombinase XerS (356 aa).

The Core-binding (CB) domain occupies 16–121 (IMPSYVLEYY…ALSSLYKYLT (106 aa)). The Tyr recombinase domain occupies 169 to 354 (GFLDYIDNEY…INEEQKNALD (186 aa)). Residues arginine 210, lysine 234, histidine 306, arginine 309, and histidine 332 contribute to the active site. Residue tyrosine 341 is the O-(3'-phospho-DNA)-tyrosine intermediate of the active site.

It belongs to the 'phage' integrase family. XerS subfamily.

It is found in the cytoplasm. With respect to regulation, ftsK is required for recombination. Site-specific tyrosine recombinase, which acts by catalyzing the cutting and rejoining of the recombining DNA molecules. Essential to convert dimers of the bacterial chromosome into monomers to permit their segregation at cell division. This Lactococcus lactis subsp. lactis (strain IL1403) (Streptococcus lactis) protein is Tyrosine recombinase XerS.